The sequence spans 339 residues: NADH-quinone oxidoreductase subunit H (339 aa).

The next 9 membrane-spanning stretches (helical) occupy residues 9–29, 50–70, 82–102, 115–135, 161–181, 187–207, 235–255, 275–295, and 311–331; these read IFPL…LILC, PNVV…KLLF, ILFI…WAVI, VGVL…IIAG, MGLV…SEII, IPWW…ISVL, MGFA…SAMT, IPGF…FLWI, and GWKV…SVLV.

This sequence belongs to the complex I subunit 1 family. In terms of assembly, NDH-1 is composed of 14 different subunits. Subunits NuoA, H, J, K, L, M, N constitute the membrane sector of the complex.

The protein resides in the cell inner membrane. It carries out the reaction a quinone + NADH + 5 H(+)(in) = a quinol + NAD(+) + 4 H(+)(out). Functionally, NDH-1 shuttles electrons from NADH, via FMN and iron-sulfur (Fe-S) centers, to quinones in the respiratory chain. The immediate electron acceptor for the enzyme in this species is believed to be ubiquinone. Couples the redox reaction to proton translocation (for every two electrons transferred, four hydrogen ions are translocated across the cytoplasmic membrane), and thus conserves the redox energy in a proton gradient. This subunit may bind ubiquinone. The sequence is that of NADH-quinone oxidoreductase subunit H from Rickettsia rickettsii (strain Iowa).